Reading from the N-terminus, the 449-residue chain is Chromosomal replication initiator protein DnaA (449 aa).

Residues 1–73 (MTQNPQWLWQ…TETIAELLQQ (73 aa)) are domain I, interacts with DnaA modulators. The interval 73–109 (QPVKVRLTSPEGNTLAATQSFYSSRSGQSTRPGKKTP) is domain II. Polar residues predominate over residues 90 to 103 (TQSFYSSRSGQSTR). Positions 90-110 (TQSFYSSRSGQSTRPGKKTPE) are disordered. Positions 110–326 (ELNSKYTFSR…GALLRAVTHI (217 aa)) are domain III, AAA+ region. ATP contacts are provided by Gly-154, Gly-156, Lys-157, and Thr-158. Residues 327–449 (AISGLPMTVE…DRINHHHQNL (123 aa)) form a domain IV, binds dsDNA region.

It belongs to the DnaA family. In terms of assembly, oligomerizes as a right-handed, spiral filament on DNA at oriC.

It is found in the cytoplasm. Plays an essential role in the initiation and regulation of chromosomal replication. ATP-DnaA binds to the origin of replication (oriC) to initiate formation of the DNA replication initiation complex once per cell cycle. Binds the DnaA box (a 9 base pair repeat at the origin) and separates the double-stranded (ds)DNA. Forms a right-handed helical filament on oriC DNA; dsDNA binds to the exterior of the filament while single-stranded (ss)DNA is stabiized in the filament's interior. The ATP-DnaA-oriC complex binds and stabilizes one strand of the AT-rich DNA unwinding element (DUE), permitting loading of DNA polymerase. After initiation quickly degrades to an ADP-DnaA complex that is not apt for DNA replication. Binds acidic phospholipids. The protein is Chromosomal replication initiator protein DnaA of Picosynechococcus sp. (strain ATCC 27264 / PCC 7002 / PR-6) (Agmenellum quadruplicatum).